We begin with the raw amino-acid sequence, 271 residues long: Aliphatic sulfonates import ATP-binding protein SsuB (271 aa).

The 222-residue stretch at 13–234 folds into the ABC transporter domain; it reads ITLESIGKRY…RKGSAKLAAL (222 aa). Position 45–52 (45–52) interacts with ATP; sequence GRSGCGKS. Residues 250–271 form a disordered region; sequence EASRQGIKASRQGTATSRRVAN. Over residues 260–271 the composition is skewed to polar residues; that stretch reads RQGTATSRRVAN.

Belongs to the ABC transporter superfamily. Aliphatic sulfonates importer (TC 3.A.1.17.2) family. In terms of assembly, the complex is composed of two ATP-binding proteins (SsuB), two transmembrane proteins (SsuC) and a solute-binding protein (SsuA).

The protein localises to the cell inner membrane. The catalysed reaction is ATP + H2O + aliphatic sulfonate-[sulfonate-binding protein]Side 1 = ADP + phosphate + aliphatic sulfonateSide 2 + [sulfonate-binding protein]Side 1.. In terms of biological role, part of the ABC transporter complex SsuABC involved in aliphatic sulfonates import. Responsible for energy coupling to the transport system. The sequence is that of Aliphatic sulfonates import ATP-binding protein SsuB from Yersinia pestis bv. Antiqua (strain Antiqua).